The primary structure comprises 85 residues: Large ribosomal subunit protein bL27 (85 aa).

Over residues 1-10 the composition is skewed to gly residues; the sequence is MAQKKGGGST. Residues 1 to 20 are disordered; the sequence is MAQKKGGGSTRNGRDSKPKM.

It belongs to the bacterial ribosomal protein bL27 family.

The sequence is that of Large ribosomal subunit protein bL27 from Delftia acidovorans (strain DSM 14801 / SPH-1).